The sequence spans 484 residues: Glycogen synthase (484 aa).

Lys-15 serves as a coordination point for ADP-alpha-D-glucose.

This sequence belongs to the glycosyltransferase 1 family. Bacterial/plant glycogen synthase subfamily.

It carries out the reaction [(1-&gt;4)-alpha-D-glucosyl](n) + ADP-alpha-D-glucose = [(1-&gt;4)-alpha-D-glucosyl](n+1) + ADP + H(+). It functions in the pathway glycan biosynthesis; glycogen biosynthesis. Synthesizes alpha-1,4-glucan chains using ADP-glucose. This chain is Glycogen synthase, found in Anoxybacillus flavithermus (strain DSM 21510 / WK1).